Here is a 360-residue protein sequence, read N- to C-terminus: MSVHLTEGRRIIQYTGFDDIDEEDVEPNEEAEGPGGVHKKRRGARKKNRRQRMEGLENVDQTVDLQLVTVPKVVPFRASRLLQEIYDRERVHGMRRDEARQLLEDKLLFLEEKSLENLHLRRFCLVVPSDEHFQLDDGSKIPSEIVSISMENGKISSILRVFPSKTRSFEMESVENFQSHRMRRVYWNPSIPKDSNSMFRTWNHFLDGCLLSLLLVPLNKLTQVLEFLRKINEMRTVINNRITVSICLSRVICVEDYLSAVQKVMNTRTVQLDHIPSMDLPSLHFALDFSRYHIQSMNTIFTGSTEMDKLSDENSSHELVEFSSWSCHREAHINMEPEKYHRILHWLWDLSPVNPVDEAE.

The span at 22–32 (EEDVEPNEEAE) shows a compositional bias: acidic residues. The tract at residues 22–55 (EEDVEPNEEAEGPGGVHKKRRGARKKNRRQRMEG) is disordered. Over residues 37–50 (VHKKRRGARKKNRR) the composition is skewed to basic residues.

This is an uncharacterized protein from Caenorhabditis elegans.